Here is a 273-residue protein sequence, read N- to C-terminus: Type II pantothenate kinase (273 aa).

Residue 8-15 participates in ATP binding; sequence DAGGTLTK. Glu76 (proton acceptor) is an active-site residue. ATP is bound by residues Thr105, 127 to 131, Phe143, and Ser230; that span reads GGTIM.

The protein belongs to the type II pantothenate kinase family. As to quaternary structure, homodimer.

The protein resides in the cytoplasm. The catalysed reaction is (R)-pantothenate + ATP = (R)-4'-phosphopantothenate + ADP + H(+). The protein operates within cofactor biosynthesis; coenzyme A biosynthesis; CoA from (R)-pantothenate: step 1/5. Its function is as follows. Catalyzes the phosphorylation of pantothenate (Pan), the first step in CoA biosynthesis. This Bacillus cereus (strain ATCC 14579 / DSM 31 / CCUG 7414 / JCM 2152 / NBRC 15305 / NCIMB 9373 / NCTC 2599 / NRRL B-3711) protein is Type II pantothenate kinase.